The primary structure comprises 438 residues: Glutamyl-tRNA reductase (438 aa).

Substrate contacts are provided by residues 49–52 (TCNR), Ser109, 114–116 (EQQ), and Gln120. The Nucleophile role is filled by Cys50. 191–196 (GAGAMA) serves as a coordination point for NADP(+).

Belongs to the glutamyl-tRNA reductase family. Homodimer.

The catalysed reaction is (S)-4-amino-5-oxopentanoate + tRNA(Glu) + NADP(+) = L-glutamyl-tRNA(Glu) + NADPH + H(+). Its pathway is porphyrin-containing compound metabolism; protoporphyrin-IX biosynthesis; 5-aminolevulinate from L-glutamyl-tRNA(Glu): step 1/2. Its function is as follows. Catalyzes the NADPH-dependent reduction of glutamyl-tRNA(Glu) to glutamate 1-semialdehyde (GSA). This Corynebacterium diphtheriae (strain ATCC 700971 / NCTC 13129 / Biotype gravis) protein is Glutamyl-tRNA reductase.